The primary structure comprises 311 residues: Acetyl-coenzyme A carboxylase carboxyl transferase subunit alpha (311 aa).

One can recognise a CoA carboxyltransferase C-terminal domain in the interval 36-286 (ELKKEVERVY…VNYFLKSLEE (251 aa)).

Belongs to the AccA family. As to quaternary structure, acetyl-CoA carboxylase is a heterohexamer composed of biotin carboxyl carrier protein (AccB), biotin carboxylase (AccC) and two subunits each of ACCase subunit alpha (AccA) and ACCase subunit beta (AccD).

It localises to the cytoplasm. The catalysed reaction is N(6)-carboxybiotinyl-L-lysyl-[protein] + acetyl-CoA = N(6)-biotinyl-L-lysyl-[protein] + malonyl-CoA. It functions in the pathway lipid metabolism; malonyl-CoA biosynthesis; malonyl-CoA from acetyl-CoA: step 1/1. Component of the acetyl coenzyme A carboxylase (ACC) complex. First, biotin carboxylase catalyzes the carboxylation of biotin on its carrier protein (BCCP) and then the CO(2) group is transferred by the carboxyltransferase to acetyl-CoA to form malonyl-CoA. This is Acetyl-coenzyme A carboxylase carboxyl transferase subunit alpha from Wolinella succinogenes (strain ATCC 29543 / DSM 1740 / CCUG 13145 / JCM 31913 / LMG 7466 / NCTC 11488 / FDC 602W) (Vibrio succinogenes).